Consider the following 602-residue polypeptide: Potassium voltage-gated channel subfamily A member 5 (602 aa).

A disordered region spans residues 1–107 (MEISLVPMEN…EDQAPQDSGS (107 aa)). The tract at residues 1 to 202 (MEISLVPMEN…FYQLGDEAME (202 aa)) is tetramerization domain. Residues 1-238 (MEISLVPMEN…LIFEYPESSG (238 aa)) are Cytoplasmic-facing. Positions 66 to 78 (PLPPMPQELPQPR) are enriched in pro residues. Ser81 is subject to Phosphoserine; by CK2 and PKA. Lys212 is covalently cross-linked (Glycyl lysine isopeptide (Lys-Gly) (interchain with G-Cter in SUMO)). Residues 239–260 (SARAIAIVSVLVILISIITFCL) traverse the membrane as a helical segment. Residues 261 to 314 (ETLPEFRDERELLRHPPVPPQPPAPAPGANGSGSGVLSSGPTVAPLLPRTLADP) lie on the Extracellular side of the membrane. The interval 274–297 (RHPPVPPQPPAPAPGANGSGSGVL) is disordered. Residues 276–286 (PPVPPQPPAPA) show a composition bias toward pro residues. Residue Asn290 is glycosylated (N-linked (GlcNAc...) asparagine). A helical transmembrane segment spans residues 315 to 336 (FFIVETTCVIWFTFELLVRFFA). Residue Cys337 is the site of S-palmitoyl cysteine attachment. At 337 to 347 (CPSKAEFSRNI) the chain is on the cytoplasmic side. Residues 348-368 (MNIIDIVAIFPYFITLGTELA) form a helical membrane-spanning segment. Over 369–384 (EQQPGGGGQNGQQAMS) the chain is Extracellular. Residues 385-405 (LAILRVIRLVRVFRIFKLSRH) form a helical; Voltage-sensor membrane-spanning segment. The Cytoplasmic segment spans residues 406–420 (SKGLQILGKTLQASM). Positions 407–420 (KGLQILGKTLQASM) are S4-S5 linker. The chain crosses the membrane as a helical span at residues 421 to 442 (RELGLLIFFLFIGVILFSSAVY). Residues 443–456 (FAEADNQGSHFSSI) are Extracellular-facing. The helical intramembrane region spans 457 to 468 (PDAFWWAVVTMT). A Selectivity filter motif is present at residues 469–474 (TVGYGD). An intramembrane segment occupies 469–476 (TVGYGDMR). Residues 477 to 483 (PITVGGK) are Extracellular-facing. The helical transmembrane segment at 484–512 (IVGSLCAIAGVLTIALPVPVIVSNFNYFY) threads the bilayer. Residues 513–602 (HRETDHEEQA…CLDTSRETDL (90 aa)) are Cytoplasmic-facing. Lys525 participates in a covalent cross-link: Glycyl lysine isopeptide (Lys-Gly) (interchain with G-Cter in SUMO). Phosphoserine; by PKA occurs at positions 535, 546, and 569. The short motif at 600–602 (TDL) is the PDZ-binding element.

This sequence belongs to the potassium channel family. A (Shaker) (TC 1.A.1.2) subfamily. Kv1.5/KCNA5 sub-subfamily. Homotetramer and heterotetramer of potassium channel proteins. Interacts with DLG1, which enhances channel currents. Forms a ternary complex with DLG1 and CAV3. Interacts with KCNAB1. Interacts with UBE2I. Interacts with XIRP2; the interaction is required for normal action potential configuration in the heart. Post-translationally, glycosylated. Sumoylated on Lys-212, and Lys-525, preferentially with SUMO3. Sumoylation regulates the voltage sensitivity of the channel. In terms of tissue distribution, expressed in the heart (at protein level). Expressed in the brain and weakly expressed in the thymus, skeletal muscle and spleen.

Its subcellular location is the cell membrane. It carries out the reaction K(+)(in) = K(+)(out). Its function is as follows. Voltage-gated potassium channel that mediates transmembrane potassium transport in excitable membranes. Forms tetrameric potassium-selective channels through which potassium ions pass in accordance with their electrochemical gradient. The channel alternates between opened and closed conformations in response to the voltage difference across the membrane. Can form functional homotetrameric channels and heterotetrameric channels that contain variable proportions of KCNA1, KCNA2, KCNA4, KCNA5, and possibly other family members as well; channel properties depend on the type of alpha subunits that are part of the channel. Channel properties are modulated by cytoplasmic beta subunits that regulate the subcellular location of the alpha subunits and promote rapid inactivation. Homotetrameric channels display rapid activation and slow inactivation. Required for normal electrical conduction including formation of the infranodal ventricular conduction system and normal action potential configuration, as a result of its interaction with XIRP2. May play a role in regulating the secretion of insulin in normal pancreatic islets. In terms of biological role, voltage-gated potassium channel that mediates transmembrane potassium transport in excitable membranes. Forms tetrameric potassium-selective channels through which potassium ions pass in accordance with their electrochemical gradient. The channel alternates between opened and closed conformations in response to the voltage difference across the membrane. Inactive. Inhibits expression of isoform 1 and isoform 2. This Mus musculus (Mouse) protein is Potassium voltage-gated channel subfamily A member 5 (Kcna5).